The chain runs to 280 residues: uncharacterized protein (280 aa).

A run of 3 helical transmembrane segments spans residues 15-35 (IVDI…INRL), 68-88 (IGFI…ILAG), and 94-114 (IVIG…VFLI).

This sequence belongs to the MscS (TC 1.A.23) family.

The protein localises to the cell membrane. May play a role in resistance to osmotic downshock. This is an uncharacterized protein from Bacillus subtilis (strain 168).